Reading from the N-terminus, the 308-residue chain is Ornithine carbamoyltransferase (308 aa).

Residues 55 to 58, Gln82, Arg106, and 133 to 136 contribute to the carbamoyl phosphate site; these read STRT and HPCQ. L-ornithine is bound by residues Asn164, Asp227, and 231–232; that span reads SM. Residues 267 to 268 and Arg295 each bind carbamoyl phosphate; that span reads CL.

It belongs to the aspartate/ornithine carbamoyltransferase superfamily. OTCase family.

It localises to the cytoplasm. It carries out the reaction carbamoyl phosphate + L-ornithine = L-citrulline + phosphate + H(+). It participates in amino-acid biosynthesis; L-arginine biosynthesis; L-arginine from L-ornithine and carbamoyl phosphate: step 1/3. Its function is as follows. Reversibly catalyzes the transfer of the carbamoyl group from carbamoyl phosphate (CP) to the N(epsilon) atom of ornithine (ORN) to produce L-citrulline. This Prochlorococcus marinus (strain MIT 9312) protein is Ornithine carbamoyltransferase.